The sequence spans 130 residues: MIGNWNYGTGRRKSAVARVFIKAGKGDIIVNGKPIADYFSRETSLMIVRQPLELTNHGQTFDIKVNVTGGGETGQAGAVRHGITRALIDYDATLKPSLSTAGFVTRDAREVERKKVGLRKARRAKQFSKR.

This sequence belongs to the universal ribosomal protein uS9 family.

The polypeptide is Small ribosomal subunit protein uS9 (Burkholderia ambifaria (strain MC40-6)).